A 105-amino-acid chain; its full sequence is Small ribosomal subunit protein uS10 (105 aa).

This sequence belongs to the universal ribosomal protein uS10 family. As to quaternary structure, part of the 30S ribosomal subunit.

In terms of biological role, involved in the binding of tRNA to the ribosomes. This Chlamydia pneumoniae (Chlamydophila pneumoniae) protein is Small ribosomal subunit protein uS10.